Here is a 115-residue protein sequence, read N- to C-terminus: Promotilin (115 aa).

Positions 1-25 (MLSRKATAVLLAVHAAAMLASQTEA) are cleaved as a signal peptide. Residues 43–72 (RYKGQKKSLSVQQRSEEVGPVDPTEPWEEK) form a disordered region.

It belongs to the motilin family.

The protein localises to the secreted. Its function is as follows. Plays an important role in the regulation of interdigestive gastrointestinal motility and indirectly causes rhythmic contraction of duodenal and colonic smooth muscle. This is Promotilin (MLN) from Bos taurus (Bovine).